The following is a 164-amino-acid chain: MTTLKIKTDKVEKPLNKEALIADKQTVKTPKEKMDNSGRFYATGKRKNAIARVWLKPGKGQVIVNKKSLDQYFASETQVKTILQPFTLTKTNNQYDIVCTVRGGGISGQKGAILHGISKALAQSAPDFHAVLRKGGFLTRDSRVVERKKYGQHKARKKTQFSKR.

This sequence belongs to the universal ribosomal protein uS9 family.

The chain is Small ribosomal subunit protein uS9 from Rickettsia bellii (strain OSU 85-389).